A 253-amino-acid polypeptide reads, in one-letter code: 3-dehydroquinate dehydratase (253 aa).

Residues 46-48 (EWR) and Arg82 contribute to the 3-dehydroquinate site. Catalysis depends on His143, which acts as the Proton donor/acceptor. Catalysis depends on Lys170, which acts as the Schiff-base intermediate with substrate. Positions 213, 232, and 236 each coordinate 3-dehydroquinate.

The protein belongs to the type-I 3-dehydroquinase family. In terms of assembly, homodimer.

The enzyme catalyses 3-dehydroquinate = 3-dehydroshikimate + H2O. Its pathway is metabolic intermediate biosynthesis; chorismate biosynthesis; chorismate from D-erythrose 4-phosphate and phosphoenolpyruvate: step 3/7. Involved in the third step of the chorismate pathway, which leads to the biosynthesis of aromatic amino acids. Catalyzes the cis-dehydration of 3-dehydroquinate (DHQ) and introduces the first double bond of the aromatic ring to yield 3-dehydroshikimate. This chain is 3-dehydroquinate dehydratase, found in Syntrophotalea carbinolica (strain DSM 2380 / NBRC 103641 / GraBd1) (Pelobacter carbinolicus).